Consider the following 310-residue polypeptide: Putative carbonic anhydrase 5 (310 aa).

The N-terminal stretch at 1 to 20 is a signal peptide; it reads MPSHLLVLSLLVALLVVVSC. The Alpha-carbonic anhydrase domain maps to 26-280; it reads HGWGYDENNG…LNGRRIQYRP (255 aa). 3 residues coordinate Zn(2+): His117, His119, and His142. 223 to 224 contributes to the substrate binding site; that stretch reads TT.

It belongs to the alpha-carbonic anhydrase family.

It is found in the secreted. It carries out the reaction hydrogencarbonate + H(+) = CO2 + H2O. Its function is as follows. Reversible hydration of carbon dioxide. The chain is Putative carbonic anhydrase 5 (cah-5) from Caenorhabditis elegans.